We begin with the raw amino-acid sequence, 512 residues long: Probable capsid protein 4 (512 aa).

It belongs to the NCLDV major capsid protein family.

The protein localises to the virion. This Acanthamoeba polyphaga mimivirus (APMV) protein is Probable capsid protein 4.